A 311-amino-acid chain; its full sequence is Aspartate carbamoyltransferase catalytic subunit (311 aa).

Carbamoyl phosphate-binding residues include Arg59 and Thr60. Lys87 serves as a coordination point for L-aspartate. Arg109, His139, and Gln142 together coordinate carbamoyl phosphate. Residues Arg172 and Arg224 each contribute to the L-aspartate site. Carbamoyl phosphate-binding residues include Ala265 and Pro266.

This sequence belongs to the aspartate/ornithine carbamoyltransferase superfamily. ATCase family. In terms of assembly, heterododecamer (2C3:3R2) of six catalytic PyrB chains organized as two trimers (C3), and six regulatory PyrI chains organized as three dimers (R2).

It catalyses the reaction carbamoyl phosphate + L-aspartate = N-carbamoyl-L-aspartate + phosphate + H(+). The protein operates within pyrimidine metabolism; UMP biosynthesis via de novo pathway; (S)-dihydroorotate from bicarbonate: step 2/3. Catalyzes the condensation of carbamoyl phosphate and aspartate to form carbamoyl aspartate and inorganic phosphate, the committed step in the de novo pyrimidine nucleotide biosynthesis pathway. The polypeptide is Aspartate carbamoyltransferase catalytic subunit (Streptococcus pyogenes serotype M1).